The chain runs to 293 residues: Triosephosphate isomerase (293 aa).

25–27 contacts substrate; it reads NWK. Residue H117 is the Electrophile of the active site. The active-site Proton acceptor is E218.

The protein belongs to the triosephosphate isomerase family. As to quaternary structure, homodimer.

The protein resides in the cytoplasm. It catalyses the reaction D-glyceraldehyde 3-phosphate = dihydroxyacetone phosphate. It participates in carbohydrate biosynthesis; gluconeogenesis. Its pathway is carbohydrate degradation; glycolysis; D-glyceraldehyde 3-phosphate from glycerone phosphate: step 1/1. In terms of biological role, involved in the gluconeogenesis. Catalyzes stereospecifically the conversion of dihydroxyacetone phosphate (DHAP) to D-glyceraldehyde-3-phosphate (G3P). This chain is Triosephosphate isomerase, found in Tropheryma whipplei (strain TW08/27) (Whipple's bacillus).